Consider the following 148-residue polypeptide: Large ribosomal subunit protein bL9 (148 aa).

The protein belongs to the bacterial ribosomal protein bL9 family.

In terms of biological role, binds to the 23S rRNA. The chain is Large ribosomal subunit protein bL9 from Bacillus thuringiensis subsp. konkukian (strain 97-27).